A 380-amino-acid chain; its full sequence is Histidinol-phosphate aminotransferase 1 (380 aa).

The residue at position 235 (lysine 235) is an N6-(pyridoxal phosphate)lysine.

This sequence belongs to the class-II pyridoxal-phosphate-dependent aminotransferase family. Histidinol-phosphate aminotransferase subfamily. As to quaternary structure, homodimer. Requires pyridoxal 5'-phosphate as cofactor.

The enzyme catalyses L-histidinol phosphate + 2-oxoglutarate = 3-(imidazol-4-yl)-2-oxopropyl phosphate + L-glutamate. It participates in amino-acid biosynthesis; L-histidine biosynthesis; L-histidine from 5-phospho-alpha-D-ribose 1-diphosphate: step 7/9. The protein is Histidinol-phosphate aminotransferase 1 of Psychrobacter arcticus (strain DSM 17307 / VKM B-2377 / 273-4).